The sequence spans 455 residues: Ribulose bisphosphate carboxylase large chain (455 aa).

An N6,N6,N6-trimethyllysine modification is found at K5. Substrate contacts are provided by N114 and T164. K166 acts as the Proton acceptor in catalysis. K168 contacts substrate. Residues K192, D194, and E195 each coordinate Mg(2+). Position 192 is an N6-carboxylysine (K192). H285 acts as the Proton acceptor in catalysis. Substrate-binding residues include R286, H318, and S370.

The protein belongs to the RuBisCO large chain family. Type I subfamily. Heterohexadecamer of 8 large chains and 8 small chains; disulfide-linked. The disulfide link is formed within the large subunit homodimers. Requires Mg(2+) as cofactor. Post-translationally, the disulfide bond which can form in the large chain dimeric partners within the hexadecamer appears to be associated with oxidative stress and protein turnover.

The protein resides in the plastid. Its subcellular location is the chloroplast. The catalysed reaction is 2 (2R)-3-phosphoglycerate + 2 H(+) = D-ribulose 1,5-bisphosphate + CO2 + H2O. It carries out the reaction D-ribulose 1,5-bisphosphate + O2 = 2-phosphoglycolate + (2R)-3-phosphoglycerate + 2 H(+). RuBisCO catalyzes two reactions: the carboxylation of D-ribulose 1,5-bisphosphate, the primary event in carbon dioxide fixation, as well as the oxidative fragmentation of the pentose substrate in the photorespiration process. Both reactions occur simultaneously and in competition at the same active site. This Lupinus microcarpus (Chick lupine) protein is Ribulose bisphosphate carboxylase large chain.